The sequence spans 199 residues: 3-isopropylmalate dehydratase small subunit (199 aa).

It belongs to the LeuD family. LeuD type 1 subfamily. Heterodimer of LeuC and LeuD.

The enzyme catalyses (2R,3S)-3-isopropylmalate = (2S)-2-isopropylmalate. Its pathway is amino-acid biosynthesis; L-leucine biosynthesis; L-leucine from 3-methyl-2-oxobutanoate: step 2/4. In terms of biological role, catalyzes the isomerization between 2-isopropylmalate and 3-isopropylmalate, via the formation of 2-isopropylmaleate. This is 3-isopropylmalate dehydratase small subunit from Tolumonas auensis (strain DSM 9187 / NBRC 110442 / TA 4).